The primary structure comprises 323 residues: Beta-ketoacyl-[acyl-carrier-protein] synthase III (323 aa).

Catalysis depends on residues Cys-114 and His-250. Residues 251–255 (QANIR) form an ACP-binding region. Residue Asn-280 is part of the active site.

The protein belongs to the thiolase-like superfamily. FabH family. As to quaternary structure, homodimer.

The protein localises to the cytoplasm. It carries out the reaction malonyl-[ACP] + acetyl-CoA + H(+) = 3-oxobutanoyl-[ACP] + CO2 + CoA. Its pathway is lipid metabolism; fatty acid biosynthesis. Functionally, catalyzes the condensation reaction of fatty acid synthesis by the addition to an acyl acceptor of two carbons from malonyl-ACP. Catalyzes the first condensation reaction which initiates fatty acid synthesis and may therefore play a role in governing the total rate of fatty acid production. Possesses both acetoacetyl-ACP synthase and acetyl transacylase activities. Its substrate specificity determines the biosynthesis of branched-chain and/or straight-chain of fatty acids. The polypeptide is Beta-ketoacyl-[acyl-carrier-protein] synthase III (Ruegeria sp. (strain TM1040) (Silicibacter sp.)).